A 180-amino-acid chain; its full sequence is Large ribosomal subunit protein uL6 (180 aa).

This sequence belongs to the universal ribosomal protein uL6 family. Part of the 50S ribosomal subunit.

Functionally, this protein binds to the 23S rRNA, and is important in its secondary structure. It is located near the subunit interface in the base of the L7/L12 stalk, and near the tRNA binding site of the peptidyltransferase center. The sequence is that of Large ribosomal subunit protein uL6 from Cutibacterium acnes (strain DSM 16379 / KPA171202) (Propionibacterium acnes).